Reading from the N-terminus, the 1189-residue chain is Lysine-specific demethylase hairless (1189 aa).

Disordered stretches follow at residues 1–40 (MEST…HHGP), 236–257 (HLQR…EMGA), 349–377 (EGGA…SHHT), 414–480 (AGSP…LQDP), and 505–552 (GEGG…RLST). Positions 239 to 254 (RAGEAERPSLHQRDGE) are enriched in basic and acidic residues. The segment covering 457-469 (KDVDSGQHDEQKG) has biased composition (basic and acidic residues). The short motif at 566 to 570 (LCRLL) is the LXXLL motif 1 element. The C6-type zinc-finger motif lies at 600–625 (CSRCHHGLFNTHWRCPRCSHRLCVAC). Residues 702 to 750 (GDAGQQKESTQKTPPTPQPSCNGDTHRTKSIKEETPDSAETPAEDRAGR) are disordered. Basic and acidic residues predominate over residues 725–736 (DTHRTKSIKEET). Positions 758 to 762 (LCELL) match the LXXLL motif 2 motif. The 212-residue stretch at 946–1157 (DTSRVENLAA…LSAQLCHQGP (212 aa)) folds into the JmjC domain. Fe cation contacts are provided by cysteine 1007, glutamate 1009, and histidine 1125.

The cofactor is Fe(2+). Strongest expression of isoforms 1 and 2 is seen in the small intestine, weaker expression in brain and colon, and trace expression is found in liver, pancreas, spleen, thymus, stomach, salivary gland, appendix and trachea. Isoform 1 is always the most abundant. Isoform 1 is exclusively expressed at low levels in kidney and testis. Isoform 2 is exclusively expressed at high levels in the skin.

The protein resides in the nucleus. It carries out the reaction N(6),N(6)-dimethyl-L-lysyl(9)-[histone H3] + 2 2-oxoglutarate + 2 O2 = L-lysyl(9)-[histone H3] + 2 formaldehyde + 2 succinate + 2 CO2. Histone demethylase that specifically demethylates both mono- and dimethylated 'Lys-9' of histone H3. May act as a transcription regulator controlling hair biology (via targeting of collagens), neural activity, and cell cycle. This chain is Lysine-specific demethylase hairless (HR), found in Homo sapiens (Human).